The sequence spans 1058 residues: MDNNQIPKNSPESSAINSAESSPKSNVSSDVLHENHHKEQQQLQQQLQQEQQQQQLPTTPQSEPTQRVNNNEEGIEMDRIAENSNINVPSDVGESSLKTISGYPSSKNTEAGSSSSGKKEEDYNYRSTWVPKLHQELFENPEVLESRRTKQRASNYRKTLEREKEGIKPLDNILEELKANANGLTKAEAQKRLEEVGPNAIPDVKRYPILEFLYFMWNPLSWTMEVAAIVSIALLDWVDFILICALLLLNATIGFIEENTAGNAVEALKNSLVSQIRCMRDGEWVMLPSPDLVPGDVVMLKIGAIIPADCRVIEAEQVKIDQSSLTGESLPVTKKIGDEVYSGSAMKQGEAKCVVTATGVNTFFGRAANLVQETEGHGHLQVILRNIGLFCISFIAIWVLVELLVDFLGYDGYCHGVGGGRCLPLNNALVLLVGGIPIAMPTVLSVTMAIGATQLSKKKAIVSRLASIEELAAMDILCSDKTGTLTLNILTVDEPLPVGDTPKEDIVFHAFLACSEGEDQDAIDKAISNYCRDTYPNVDYSGNEIVKHYPFNPEDKKAMGLVNANGKQFKTAKGAPQIILREADNYKQVGEAVEKEIENLADRGYRALGVSVSYDAPDFKVWHFEGLIPLFDPPRHDTEDTIKRALEMGVSVKMITGDQLAIAKETARRLGMGGNLFTIPYLENNDLGISEGEVIEMADGFAEMWPEHKYKVVDQLQKRKHVVGMTGDGVNDAPALKKAQIGIAVAGATDAARSVSDIVLTSSGLSVIIDAIISSRKIFQRMRNYVIYSVAATVRICTTFGILTVAWNFKFPTIATVIIAILNDGTMLTISKDRVRARNEPDQWNLFEVFTMALCYGFYLVGSTIVFFAIIHDGTWFHDAINLRILTDNELRGLIYLQVSISGLATIFVSRSQGFSYFERPGNLVIFAFVMSQIVATFIGVYGFRGYPHDSFSDNPDYPVHGTNFQGCGWGWAVCAWIWCFLWYIPMDFIKLGVTYILRGKIEPINKDALRKIYGWFGKEIPKEATQVSHKVAEQQAKRDALHAQETHHKSVVTDNKV.

The span at 1–29 shows a compositional bias: polar residues; sequence MDNNQIPKNSPESSAINSAESSPKSNVSS. The tract at residues 1-123 is disordered; it reads MDNNQIPKNS…SSSGKKEEDY (123 aa). The Cytoplasmic segment spans residues 1–212; it reads MDNNQIPKNS…DVKRYPILEF (212 aa). Residues 31–40 are compositionally biased toward basic and acidic residues; it reads VLHENHHKEQ. Residues 41-66 are compositionally biased toward low complexity; it reads QQLQQQLQQEQQQQQLPTTPQSEPTQ. The span at 96-111 shows a compositional bias: polar residues; sequence SLKTISGYPSSKNTEA. Residues 213–232 traverse the membrane as a helical segment; it reads LYFMWNPLSWTMEVAAIVSI. Residues 233 to 237 are Extracellular-facing; it reads ALLDW. A helical transmembrane segment spans residues 238 to 258; sequence VDFILICALLLLNATIGFIEE. At 259–387 the chain is on the cytoplasmic side; sequence NTAGNAVEAL…GHLQVILRNI (129 aa). Residues 388 to 407 traverse the membrane as a helical segment; that stretch reads GLFCISFIAIWVLVELLVDF. Residues 408-425 lie on the Extracellular side of the membrane; sequence LGYDGYCHGVGGGRCLPL. A helical transmembrane segment spans residues 426–447; the sequence is NNALVLLVGGIPIAMPTVLSVT. Topologically, residues 448–783 are cytoplasmic; sequence MAIGATQLSK…SSRKIFQRMR (336 aa). The 4-aspartylphosphate intermediate role is filled by D480. Mg(2+)-binding residues include D728 and D732. Residues 784-805 traverse the membrane as a helical segment; that stretch reads NYVIYSVAATVRICTTFGILTV. Residues 806 to 810 lie on the Extracellular side of the membrane; the sequence is AWNFK. A helical transmembrane segment spans residues 811–833; that stretch reads FPTIATVIIAILNDGTMLTISKD. Residues 834 to 849 are Cytoplasmic-facing; sequence RVRARNEPDQWNLFEV. The helical transmembrane segment at 850–870 threads the bilayer; it reads FTMALCYGFYLVGSTIVFFAI. The Extracellular portion of the chain corresponds to 871-889; it reads IHDGTWFHDAINLRILTDN. A helical transmembrane segment spans residues 890 to 910; that stretch reads ELRGLIYLQVSISGLATIFVS. Topologically, residues 911–922 are cytoplasmic; the sequence is RSQGFSYFERPG. The chain crosses the membrane as a helical span at residues 923-943; that stretch reads NLVIFAFVMSQIVATFIGVYG. Over 944–967 the chain is Extracellular; the sequence is FRGYPHDSFSDNPDYPVHGTNFQG. A helical membrane pass occupies residues 968 to 988; it reads CGWGWAVCAWIWCFLWYIPMD. Over 989 to 1058 the chain is Cytoplasmic; that stretch reads FIKLGVTYIL…HKSVVTDNKV (70 aa).

This sequence belongs to the cation transport ATPase (P-type) (TC 3.A.3) family. Type IIIA subfamily.

It is found in the cell membrane. It catalyses the reaction ATP + H2O + H(+)(in) = ADP + phosphate + 2 H(+)(out). With respect to regulation, acid pH levels increase its ATPase activity. Functionally, P-type plasma membrane H+-ATPase (proton pump). The proton gradient it generates drives the active transport of nutrients by H(+) symport. The resulting external acidification and/or internal alkinization may mediate growth responses. This Dictyostelium discoideum (Social amoeba) protein is Probable plasma membrane ATPase (patB).